A 346-amino-acid polypeptide reads, in one-letter code: Heat-inducible transcription repressor HrcA (346 aa).

It belongs to the HrcA family.

Negative regulator of class I heat shock genes (grpE-dnaK-dnaJ and groELS operons). Prevents heat-shock induction of these operons. This chain is Heat-inducible transcription repressor HrcA, found in Erythrobacter litoralis (strain HTCC2594).